The chain runs to 400 residues: Cytohesin-3 (400 aa).

A coiled-coil region spans residues 14–61 (EDLSLEEREELLDIRRRKKELIDDIERLKYEIAEVMTEIDNLTSVEES). The region spanning 77–206 (FNMDPKKGIQ…IIMLNTSLHN (130 aa)) is the SEC7 domain. The PH domain maps to 264–381 (NPDREGWLLK…WMKSIKASIS (118 aa)). A 1,2-diacyl-sn-glycero-3-phospho-(1D-myo-inositol-3,4,5-trisphosphate)-binding positions include 273-281 (KLGGGRVKT), R285, Y296, R306, and N355. Positions 392-400 (RKRRIANKK) are C-terminal autoinhibitory region.

In terms of assembly, interacts with TAMALIN. Interacts with ARF6. Interacts with FRMD4A. Interacts with FRMD4B. As to expression, almost absent from liver, thymus and peripheral blood lymphocytes.

It is found in the cytoplasm. The protein resides in the cytosol. The protein localises to the cell membrane. Its subcellular location is the cell junction. It localises to the adherens junction. It is found in the tight junction. In terms of biological role, promotes guanine-nucleotide exchange on ARF1 and ARF6. Promotes the activation of ARF factors through replacement of GDP with GTP. Plays a role in the epithelial polarization. The chain is Cytohesin-3 from Homo sapiens (Human).